The following is a 316-amino-acid chain: Pantothenate kinase (316 aa).

95–102 (GSVAVGKS) serves as a coordination point for ATP.

The protein belongs to the prokaryotic pantothenate kinase family.

It localises to the cytoplasm. The enzyme catalyses (R)-pantothenate + ATP = (R)-4'-phosphopantothenate + ADP + H(+). Its pathway is cofactor biosynthesis; coenzyme A biosynthesis; CoA from (R)-pantothenate: step 1/5. The polypeptide is Pantothenate kinase (Shewanella pealeana (strain ATCC 700345 / ANG-SQ1)).